A 460-amino-acid polypeptide reads, in one-letter code: SPbeta prophage-derived uncharacterized protein YopQ (460 aa).

This is SPbeta prophage-derived uncharacterized protein YopQ (yopQ) from Bacillus subtilis (strain 168).